Here is a 123-residue protein sequence, read N- to C-terminus: Small ribosomal subunit protein uS12 (123 aa).

A disordered region spans residues methionine 1–proline 28. Aspartate 89 carries the 3-methylthioaspartic acid modification.

The protein belongs to the universal ribosomal protein uS12 family. As to quaternary structure, part of the 30S ribosomal subunit. Contacts proteins S8 and S17. May interact with IF1 in the 30S initiation complex.

Functionally, with S4 and S5 plays an important role in translational accuracy. In terms of biological role, interacts with and stabilizes bases of the 16S rRNA that are involved in tRNA selection in the A site and with the mRNA backbone. Located at the interface of the 30S and 50S subunits, it traverses the body of the 30S subunit contacting proteins on the other side and probably holding the rRNA structure together. The combined cluster of proteins S8, S12 and S17 appears to hold together the shoulder and platform of the 30S subunit. In Cereibacter sphaeroides (strain ATCC 17029 / ATH 2.4.9) (Rhodobacter sphaeroides), this protein is Small ribosomal subunit protein uS12.